A 217-amino-acid chain; its full sequence is Adenosylcobinamide-GDP ribazoletransferase (217 aa).

The next 5 helical transmembrane spans lie at Ala-6–Ala-26, Gly-39–Met-61, Gly-95–Ser-115, Pro-116–Phe-136, and Ala-162–Leu-182.

The protein belongs to the CobS family. Requires Mg(2+) as cofactor.

Its subcellular location is the cell membrane. It carries out the reaction alpha-ribazole + adenosylcob(III)inamide-GDP = adenosylcob(III)alamin + GMP + H(+). The catalysed reaction is alpha-ribazole 5'-phosphate + adenosylcob(III)inamide-GDP = adenosylcob(III)alamin 5'-phosphate + GMP + H(+). It participates in cofactor biosynthesis; adenosylcobalamin biosynthesis; adenosylcobalamin from cob(II)yrinate a,c-diamide: step 7/7. Its function is as follows. Joins adenosylcobinamide-GDP and alpha-ribazole to generate adenosylcobalamin (Ado-cobalamin). Also synthesizes adenosylcobalamin 5'-phosphate from adenosylcobinamide-GDP and alpha-ribazole 5'-phosphate. In Pyrobaculum calidifontis (strain DSM 21063 / JCM 11548 / VA1), this protein is Adenosylcobinamide-GDP ribazoletransferase.